The primary structure comprises 119 residues: uncharacterized protein (119 aa).

Transmembrane regions (helical) follow at residues 61-80 (LISA…LLSV) and 87-103 (VVGV…VDII).

It is found in the membrane. This is an uncharacterized protein from Saccharomyces cerevisiae (strain ATCC 204508 / S288c) (Baker's yeast).